Consider the following 419-residue polypeptide: F-box/FBD/LRR-repeat protein At4g26340 (419 aa).

One can recognise an F-box domain in the interval 1–53; sequence MDRISQLSDDLLLQILSFIPGKDVVATSLLSKRWQSLWMLVSELEYDDSYHTG. LRR repeat units follow at residues 55–81, 132–159, 160–185, 187–208, 226–253, 254–284, and 299–324; these read YKSF…HLNL, TLRL…HLKT, VDYE…FVER, DQDL…SMID, YLNI…HVDI, TQGV…MCPS, and VVKG…KLID. Residues 339 to 389 form the FBD domain; that stretch reads GWKLPSSVPECLLFSLEAFEWIGYKGRRGDREVATYVLKNAACLRTAKFSP.

The polypeptide is F-box/FBD/LRR-repeat protein At4g26340 (Arabidopsis thaliana (Mouse-ear cress)).